A 430-amino-acid polypeptide reads, in one-letter code: T-kininogen 1 (430 aa).

An N-terminal signal peptide occupies residues 1–18 (MKLITILLLCSRLLPSLA). Gln19 bears the Pyrrolidone carboxylic acid mark. A Cystatin kininogen-type 1 domain is found at 28-131 (CNDETVFQAV…TQICNITPGK (104 aa)). Intrachain disulfides connect Cys28-Cys404, Cys83-Cys94, Cys107-Cys125, Cys141-Cys144, Cys205-Cys217, Cys228-Cys247, Cys263-Cys266, Cys327-Cys339, and Cys350-Cys369. Asn82 carries an N-linked (GlcNAc...) asparagine glycan. The Cystatin kininogen-type 2 domain occupies 150 to 253 (MDSSDLKPVL…SQSCDLYPGD (104 aa)). N-linked (GlcNAc...) asparagine glycosylation is found at Asn168 and Asn204. The Cystatin kininogen-type 3 domain maps to 272-375 (VDSPELKEAL…TVRCQALDMM (104 aa)). N-linked (GlcNAc...) asparagine glycosylation is present at Asn326. The disordered stretch occupies residues 411 to 430 (SKARAGPAPDHQAEASTVTP).

Post-translationally, as T-kinin is preceded by a Met instead of an Arg or Lys, it is not released from its precursor by either tissue or plasma kallikrein. Plasma.

The protein localises to the secreted. The protein resides in the extracellular space. Its function is as follows. Kininogens are plasma glycoproteins with a number of functions: (1) as precursor of the active peptide bradykinin they effect smooth muscle contraction, induction of hypotension and increase of vascular permeability. (2) They play a role in blood coagulation by helping to position optimally prekallikrein and factor XI next to factor XII. (3) They are inhibitor of thiol proteases. The chain is T-kininogen 1 (Map1) from Rattus norvegicus (Rat).